The sequence spans 302 residues: MAQKRLTHLRQLEAESIHIIREVAAEFSNPVMLYSIGKDSSVMLHLARKAFYPGTLPFPLLHVDTGWKFREMYEFRDRTAKAYGCELLVHKNPEGVAMGINPFVHGSAKHTDIMKTEGLKQALNKYGFDAAFGGARRDEEKSRAKERIYSFRDRFHRWDPKNQRPELWHNYNGQINKGESIRVFPLSNWTEQDIWQYIWLENIDIVPLYLAAERPVLERDGMLMMIDDNRIDLQPGEVIKKRMVRFRTLGCWPLTGAVESNAQTLPEIIEEMLVSTTSERQGRVIDRDQAGSMELKKRQGYF.

Belongs to the PAPS reductase family. CysD subfamily. Heterodimer composed of CysD, the smaller subunit, and CysN.

The catalysed reaction is sulfate + ATP + H(+) = adenosine 5'-phosphosulfate + diphosphate. The protein operates within sulfur metabolism; hydrogen sulfide biosynthesis; sulfite from sulfate: step 1/3. With CysN forms the ATP sulfurylase (ATPS) that catalyzes the adenylation of sulfate producing adenosine 5'-phosphosulfate (APS) and diphosphate, the first enzymatic step in sulfur assimilation pathway. APS synthesis involves the formation of a high-energy phosphoric-sulfuric acid anhydride bond driven by GTP hydrolysis by CysN coupled to ATP hydrolysis by CysD. The chain is Sulfate adenylyltransferase subunit 2 from Shigella boydii serotype 4 (strain Sb227).